Reading from the N-terminus, the 362-residue chain is D-alanine--D-alanine ligase (362 aa).

Positions Lys141–Arg346 constitute an ATP-grasp domain. Glu174–Glu229 contacts ATP. Asp300, Glu313, and Asn315 together coordinate Mg(2+).

It belongs to the D-alanine--D-alanine ligase family. Requires Mg(2+) as cofactor. It depends on Mn(2+) as a cofactor.

The protein localises to the cytoplasm. The catalysed reaction is 2 D-alanine + ATP = D-alanyl-D-alanine + ADP + phosphate + H(+). Its pathway is cell wall biogenesis; peptidoglycan biosynthesis. Cell wall formation. This chain is D-alanine--D-alanine ligase, found in Bacillus cytotoxicus (strain DSM 22905 / CIP 110041 / 391-98 / NVH 391-98).